The sequence spans 320 residues: Putative GDP-polyphosphate phosphotransferase PKK2A (320 aa).

3 disordered regions span residues 1 to 21, 246 to 267, and 281 to 320; these read MRKK…PKLD, RPLP…PPRD, and EERI…KSKK. The segment covering 12–21 has biased composition (basic and acidic residues); sequence DFRKNPPKLD. The span at 281-290 shows a compositional bias: basic and acidic residues; it reads EERIKKEEKA.

This sequence belongs to the polyphosphate kinase 2 (PPK2) family. Class I subfamily.

It carries out the reaction [phosphate](n) + GTP = [phosphate](n+1) + GDP. In Corynebacterium glutamicum (strain ATCC 13032 / DSM 20300 / JCM 1318 / BCRC 11384 / CCUG 27702 / LMG 3730 / NBRC 12168 / NCIMB 10025 / NRRL B-2784 / 534), this protein is Putative GDP-polyphosphate phosphotransferase PKK2A.